The sequence spans 89 residues: NAD(P)H-quinone oxidoreductase subunit L (89 aa).

The next 2 membrane-spanning stretches (helical) occupy residues 29–46 (VLGG…FYWM) and 59–79 (LFIY…APFL).

The protein belongs to the complex I NdhL subunit family. As to quaternary structure, NDH-1 can be composed of about 15 different subunits; different subcomplexes with different compositions have been identified which probably have different functions.

It localises to the cellular thylakoid membrane. The enzyme catalyses a plastoquinone + NADH + (n+1) H(+)(in) = a plastoquinol + NAD(+) + n H(+)(out). It carries out the reaction a plastoquinone + NADPH + (n+1) H(+)(in) = a plastoquinol + NADP(+) + n H(+)(out). Its function is as follows. NDH-1 shuttles electrons from an unknown electron donor, via FMN and iron-sulfur (Fe-S) centers, to quinones in the respiratory and/or the photosynthetic chain. The immediate electron acceptor for the enzyme in this species is believed to be plastoquinone. Couples the redox reaction to proton translocation, and thus conserves the redox energy in a proton gradient. Cyanobacterial NDH-1 also plays a role in inorganic carbon-concentration. This is NAD(P)H-quinone oxidoreductase subunit L from Prochlorococcus marinus (strain NATL1A).